Here is a 695-residue protein sequence, read N- to C-terminus: uncharacterized protein (695 aa).

2 disordered regions span residues 1–112 (MSRL…KHKK) and 242–262 (MKKV…NNDH). The span at 32–47 (DSSSSSDSPNFFPSSS) shows a compositional bias: low complexity. A compositionally biased stretch (basic and acidic residues) spans 96–107 (KTEKEKEKEPIQ). The tr-type G domain occupies 278–492 (KPRTKLLLLG…KIDKEADTNH (215 aa)). Residues 287-294 (GPPKSGKK), 357-361 (IFTTN), and 417-420 (TKMD) contribute to the GTP site.

It belongs to the TRAFAC class translation factor GTPase superfamily. Classic translation factor GTPase family.

It is found in the cytoplasm. Its subcellular location is the nucleus. This is an uncharacterized protein from Schizosaccharomyces pombe (strain 972 / ATCC 24843) (Fission yeast).